The primary structure comprises 205 residues: FMN-dependent NADH:quinone oxidoreductase (205 aa).

FMN-binding positions include serine 10, 16–18, and 96–99; these read SHS and MYNF.

Belongs to the azoreductase type 1 family. As to quaternary structure, homodimer. Requires FMN as cofactor.

The enzyme catalyses 2 a quinone + NADH + H(+) = 2 a 1,4-benzosemiquinone + NAD(+). The catalysed reaction is N,N-dimethyl-1,4-phenylenediamine + anthranilate + 2 NAD(+) = 2-(4-dimethylaminophenyl)diazenylbenzoate + 2 NADH + 2 H(+). Its function is as follows. Quinone reductase that provides resistance to thiol-specific stress caused by electrophilic quinones. Functionally, also exhibits azoreductase activity. Catalyzes the reductive cleavage of the azo bond in aromatic azo compounds to the corresponding amines. In Nostoc punctiforme (strain ATCC 29133 / PCC 73102), this protein is FMN-dependent NADH:quinone oxidoreductase.